We begin with the raw amino-acid sequence, 172 residues long: AIG2-like protein C (172 aa).

Residue 13-18 (YGSLQE) participates in substrate binding. The Proton acceptor role is filled by E81.

It belongs to the gamma-glutamylcyclotransferase family. In terms of tissue distribution, expressed in flowers, leaves, stems and roots.

Functionally, putative gamma-glutamylcyclotransferase. The sequence is that of AIG2-like protein C from Arabidopsis thaliana (Mouse-ear cress).